The primary structure comprises 562 residues: Calcium-dependent protein kinase 5 (562 aa).

Residues 118-372 (ELDKYKLGKG…VHKIVNHKWF (255 aa)) enclose the Protein kinase domain. Residues 124–132 (LGKGSYGNV) and K147 contribute to the ATP site. The active-site Proton acceptor is D238. A J domain autoinhibitory motif motif is present at residues 394–402 (KFKKFHKLC). Residues 394–429 (KFKKFHKLCKIKKLAITCIAYQLNKKKFGKMKKTFE) form a j domain region. The short motif at 403 to 412 (KIKKLAITCI) is the J domain EF-hand interaction motif element. EF-hand domains follow at residues 419 to 453 (KKFGKMKKTFEAFDHNGDGVLTISEIFQCLKVGDN), 454 to 489 (EIDRDLYYLLKQLDTDGNGLIDYTEFLAACLDHSIL), 490 to 525 (EQDAVCRNAFKIFDANGDGIITKDELLNVLSFSNDQ), and 528 to 562 (FSKEIIENVIKEVDANNDGYIDYDEFYKMMSGRQS). The Ca(2+) site is built by D432, N434, D436, E443, D467, D469, N471, E478, D503, N505, D507, E514, D541, N543, D545, Y547, and E552.

This sequence belongs to the protein kinase superfamily. Ser/Thr protein kinase family. CDPK subfamily. Requires Mg(2+) as cofactor. In terms of processing, may be palmitoylated. Post-translationally, autophosphorylated in vitro.

It is found in the cytoplasm. Its subcellular location is the cytoplasmic vesicle. The protein localises to the secretory vesicle. It localises to the microneme membrane. The protein resides in the cell membrane. The enzyme catalyses L-seryl-[protein] + ATP = O-phospho-L-seryl-[protein] + ADP + H(+). It catalyses the reaction L-threonyl-[protein] + ATP = O-phospho-L-threonyl-[protein] + ADP + H(+). Activated by calcium. Upon calcium binding to the EF-hand domains, the C-terminus of the junction domain (J domain) undergoes a conformational change which results in the dissociation of the pseudo-substrate inhibitory motif from the catalytic domain. This, in turn, may facilitate the autophosphorylation of the activation loop at Thr-278, which leads to the kinase activation. Functionally, calcium-dependent protein kinase which acts as a sensor and effector of intracellular Ca(2+) levels probably in part downstream of cGMP-activated PKG kinase. Plays a central role in host erythrocytes and hepatocytes infection cycles. During the liver stage, involved in sporozoite motility and thus in sporozoite invasion of host hepatocytes, probably together with CDPK1 and CDPK4. Involved in merosome egress from host hepatocytes, probably together with CDPK4. Required for the release of hepatic merozoites from merosomes in the host blood stream. During the asexual blood stage, required for merozoite egress from host erythrocytes by triggering microneme secretion. Phosphorylates transporter NPT1 at late schizont stage. This Plasmodium berghei (strain Anka) protein is Calcium-dependent protein kinase 5.